The primary structure comprises 76 residues: uncharacterized protein (76 aa).

This sequence to M.jannaschii MJ0857 N-terminal region.

This is an uncharacterized protein from Methanocaldococcus jannaschii (strain ATCC 43067 / DSM 2661 / JAL-1 / JCM 10045 / NBRC 100440) (Methanococcus jannaschii).